The following is a 375-amino-acid chain: EP300-interacting inhibitor of differentiation 3 (375 aa).

Positions 23–51 (AWQHLVKQEEEEAVKKEEKEEGEDEEEEG) form a coiled coil. A disordered region spans residues 30–68 (QEEEEAVKKEEKEEGEDEEEEGSDSSSDDPNPEPPCMHP). Residues 42–60 (EEGEDEEEEGSDSSSDDPN) show a composition bias toward acidic residues.

The protein belongs to the NSE4 family. In terms of assembly, component of the SMC5-SMC6 complex which consists at least of SMC5, SMC6, NSMCE2, NSMCE1, NSMCE4A or EID3 and NSMCE3; EID3 seems to be a testis-specific subunit. NSMCE1, NSMCE4A or EID3 and NSMCE3 probably form a subcomplex that bridges the head domains of the SMC5:SMC6 heterodimer. Homodimer, and heterodimer with EID2. Interacts with the C-terminal region of CREBBP.

The protein resides in the nucleus. It localises to the cytoplasm. It is found in the chromosome. Its subcellular location is the telomere. Tissue-specific component of the SMC5-SMC6 complex, a complex involved in repair of DNA double-strand breaks by homologous recombination. The complex may promote sister chromatid homologous recombination by recruiting the SMC1-SMC3 cohesin complex to double-strand breaks. The complex is required for telomere maintenance via recombination and mediates sumoylation of shelterin complex (telosome) components. Its function is as follows. Acts as a repressor of nuclear receptor-dependent transcription possibly by interfering with CREBBP-dependent coactivation. May function as a coinhibitor of other CREBBP/EP300-dependent transcription factors. This Mus musculus (Mouse) protein is EP300-interacting inhibitor of differentiation 3.